The following is a 78-amino-acid chain: Acyl carrier protein (78 aa).

Residues alanine 4 to lysine 78 form the Carrier domain. Serine 39 bears the O-(pantetheine 4'-phosphoryl)serine mark.

This sequence belongs to the acyl carrier protein (ACP) family. In terms of processing, 4'-phosphopantetheine is transferred from CoA to a specific serine of apo-ACP by AcpS. This modification is essential for activity because fatty acids are bound in thioester linkage to the sulfhydryl of the prosthetic group.

The protein localises to the cytoplasm. The protein operates within lipid metabolism; fatty acid biosynthesis. Its function is as follows. Carrier of the growing fatty acid chain in fatty acid biosynthesis. The polypeptide is Acyl carrier protein (Chlorobium phaeovibrioides (strain DSM 265 / 1930) (Prosthecochloris vibrioformis (strain DSM 265))).